A 195-amino-acid polypeptide reads, in one-letter code: Large ribosomal subunit protein uL5 (195 aa).

The protein belongs to the universal ribosomal protein uL5 family. In terms of assembly, part of the 50S ribosomal subunit; part of the 5S rRNA/L5/L18/L25 subcomplex. Contacts the 5S rRNA and the P site tRNA. Forms a bridge to the 30S subunit in the 70S ribosome.

Its function is as follows. This is one of the proteins that bind and probably mediate the attachment of the 5S RNA into the large ribosomal subunit, where it forms part of the central protuberance. In the 70S ribosome it contacts protein S13 of the 30S subunit (bridge B1b), connecting the 2 subunits; this bridge is implicated in subunit movement. Contacts the P site tRNA; the 5S rRNA and some of its associated proteins might help stabilize positioning of ribosome-bound tRNAs. The sequence is that of Large ribosomal subunit protein uL5 from Chlorobium phaeobacteroides (strain DSM 266 / SMG 266 / 2430).